The primary structure comprises 229 residues: Enolase-phosphatase E1 (229 aa).

Residues Asp-7 and Glu-9 each contribute to the Mg(2+) site. Substrate is bound by residues 122 to 123 (SS) and Lys-161. Asp-186 lines the Mg(2+) pocket.

This sequence belongs to the HAD-like hydrolase superfamily. MasA/MtnC family. Monomer. Requires Mg(2+) as cofactor.

The protein localises to the cytoplasm. The protein resides in the nucleus. The catalysed reaction is 5-methylsulfanyl-2,3-dioxopentyl phosphate + H2O = 1,2-dihydroxy-5-(methylsulfanyl)pent-1-en-3-one + phosphate. It functions in the pathway amino-acid biosynthesis; L-methionine biosynthesis via salvage pathway; L-methionine from S-methyl-5-thio-alpha-D-ribose 1-phosphate: step 3/6. The protein operates within amino-acid biosynthesis; L-methionine biosynthesis via salvage pathway; L-methionine from S-methyl-5-thio-alpha-D-ribose 1-phosphate: step 4/6. Functionally, bifunctional enzyme that catalyzes the enolization of 2,3-diketo-5-methylthiopentyl-1-phosphate (DK-MTP-1-P) into the intermediate 2-hydroxy-3-keto-5-methylthiopentenyl-1-phosphate (HK-MTPenyl-1-P), which is then dephosphorylated to form the acireductone 1,2-dihydroxy-3-keto-5-methylthiopentene (DHK-MTPene). The protein is Enolase-phosphatase E1 of Clavispora lusitaniae (strain ATCC 42720) (Yeast).